Here is a 357-residue protein sequence, read N- to C-terminus: Fructose-bisphosphate aldolase, cytoplasmic isozyme 1 (357 aa).

The substrate site is built by arginine 52 and lysine 142. Glutamate 183 acts as the Proton acceptor in catalysis. The Schiff-base intermediate with dihydroxyacetone-P role is filled by lysine 225.

This sequence belongs to the class I fructose-bisphosphate aldolase family.

Its subcellular location is the cytoplasm. It catalyses the reaction beta-D-fructose 1,6-bisphosphate = D-glyceraldehyde 3-phosphate + dihydroxyacetone phosphate. It participates in carbohydrate degradation; glycolysis; D-glyceraldehyde 3-phosphate and glycerone phosphate from D-glucose: step 4/4. The sequence is that of Fructose-bisphosphate aldolase, cytoplasmic isozyme 1 from Pisum sativum (Garden pea).